The chain runs to 189 residues: ATP synthase subunit b (189 aa).

The helical transmembrane segment at 38-58 (PMFLATLIAFILVVLILWFLL) threads the bilayer.

Belongs to the ATPase B chain family. F-type ATPases have 2 components, F(1) - the catalytic core - and F(0) - the membrane proton channel. F(1) has five subunits: alpha(3), beta(3), gamma(1), delta(1), epsilon(1). F(0) has three main subunits: a(1), b(2) and c(10-14). The alpha and beta chains form an alternating ring which encloses part of the gamma chain. F(1) is attached to F(0) by a central stalk formed by the gamma and epsilon chains, while a peripheral stalk is formed by the delta and b chains.

It is found in the cell membrane. In terms of biological role, f(1)F(0) ATP synthase produces ATP from ADP in the presence of a proton or sodium gradient. F-type ATPases consist of two structural domains, F(1) containing the extramembraneous catalytic core and F(0) containing the membrane proton channel, linked together by a central stalk and a peripheral stalk. During catalysis, ATP synthesis in the catalytic domain of F(1) is coupled via a rotary mechanism of the central stalk subunits to proton translocation. Functionally, component of the F(0) channel, it forms part of the peripheral stalk, linking F(1) to F(0). The protein is ATP synthase subunit b of Mycoplasmopsis agalactiae (strain NCTC 10123 / CIP 59.7 / PG2) (Mycoplasma agalactiae).